A 245-amino-acid chain; its full sequence is Probable transcriptional regulatory protein BF2589 (245 aa).

Residues 225–245 (EDEDVQNVYTNMKPADNEGEE) are disordered.

Belongs to the TACO1 family.

It localises to the cytoplasm. The protein is Probable transcriptional regulatory protein BF2589 of Bacteroides fragilis (strain ATCC 25285 / DSM 2151 / CCUG 4856 / JCM 11019 / LMG 10263 / NCTC 9343 / Onslow / VPI 2553 / EN-2).